The sequence spans 179 residues: Inner membrane-spanning protein YciB (179 aa).

5 consecutive transmembrane segments (helical) span residues 22–42 (IYAATSALIVATAIVLIYSWV), 50–70 (MALITFVLVAVFGGLTIFFHN), 76–96 (WKVTVIYGLFAGALLISQWVM), 121–141 (LAWAVFFILCGLANIYIAFWL), and 149–169 (FKVFGLTALTLIFTLLSGVYI).

Belongs to the YciB family.

The protein localises to the cell inner membrane. Its function is as follows. Plays a role in cell envelope biogenesis, maintenance of cell envelope integrity and membrane homeostasis. The protein is Inner membrane-spanning protein YciB of Citrobacter koseri (strain ATCC BAA-895 / CDC 4225-83 / SGSC4696).